Reading from the N-terminus, the 56-residue chain is MAVQQNKPTRSKRGMRRSHDALTATHVSVDKTSGETHLRHHVTADGYYRGRKVINK.

Residues 1-35 form a disordered region; it reads MAVQQNKPTRSKRGMRRSHDALTATHVSVDKTSGE.

It belongs to the bacterial ribosomal protein bL32 family.

In Proteus mirabilis (strain HI4320), this protein is Large ribosomal subunit protein bL32.